Here is a 598-residue protein sequence, read N- to C-terminus: Elongation factor 4 (598 aa).

A tr-type G domain is found at 2-184 (QHIRNFSIIA…TVVRRVPPPK (183 aa)). Residues 14 to 19 (DHGKST) and 131 to 134 (NKID) contribute to the GTP site.

The protein belongs to the TRAFAC class translation factor GTPase superfamily. Classic translation factor GTPase family. LepA subfamily.

It is found in the cell inner membrane. The enzyme catalyses GTP + H2O = GDP + phosphate + H(+). Its function is as follows. Required for accurate and efficient protein synthesis under certain stress conditions. May act as a fidelity factor of the translation reaction, by catalyzing a one-codon backward translocation of tRNAs on improperly translocated ribosomes. Back-translocation proceeds from a post-translocation (POST) complex to a pre-translocation (PRE) complex, thus giving elongation factor G a second chance to translocate the tRNAs correctly. Binds to ribosomes in a GTP-dependent manner. This is Elongation factor 4 from Aromatoleum aromaticum (strain DSM 19018 / LMG 30748 / EbN1) (Azoarcus sp. (strain EbN1)).